The primary structure comprises 945 residues: Isoleucine--tRNA ligase (945 aa).

The short motif at 66–76 is the 'HIGH' region element; it reads PYANGDIHLGH. Glutamate 581 is an L-isoleucyl-5'-AMP binding site. A 'KMSKS' region motif is present at residues 622 to 626; it reads KMSKS. ATP is bound at residue lysine 625. Residues cysteine 908, cysteine 911, cysteine 928, and cysteine 931 each coordinate Zn(2+).

The protein belongs to the class-I aminoacyl-tRNA synthetase family. IleS type 1 subfamily. Monomer. Zn(2+) is required as a cofactor.

Its subcellular location is the cytoplasm. It catalyses the reaction tRNA(Ile) + L-isoleucine + ATP = L-isoleucyl-tRNA(Ile) + AMP + diphosphate. In terms of biological role, catalyzes the attachment of isoleucine to tRNA(Ile). As IleRS can inadvertently accommodate and process structurally similar amino acids such as valine, to avoid such errors it has two additional distinct tRNA(Ile)-dependent editing activities. One activity is designated as 'pretransfer' editing and involves the hydrolysis of activated Val-AMP. The other activity is designated 'posttransfer' editing and involves deacylation of mischarged Val-tRNA(Ile). This is Isoleucine--tRNA ligase from Burkholderia cenocepacia (strain HI2424).